The sequence spans 576 residues: Probable lysosomal cobalamin transporter (576 aa).

A run of 10 helical transmembrane segments spans residues 8 to 28, 40 to 60, 98 to 118, 145 to 165, 188 to 208, 312 to 332, 347 to 367, 377 to 397, 419 to 439, and 503 to 523; these read LIWA…SVFI, VVTF…LLLP, YLLY…VYFW, TISF…VPVA, VLTF…ILYT, LLGG…MLLT, GYIL…VQSA, LTVV…TIGI, LTTA…PMLV, and FFGT…LLVL. The segment at 549-576 is disordered; sequence RLLTSSARGVGDTYQSVGGRNNFSTRAG. Residues 561-576 are compositionally biased toward polar residues; sequence TYQSVGGRNNFSTRAG. A glycan (N-linked (GlcNAc...) asparagine) is linked at asparagine 570.

The protein belongs to the LIMR family. LMBRD1 subfamily.

It is found in the lysosome membrane. Probable lysosomal cobalamin transporter. Required to export cobalamin from lysosomes allowing its conversion to cofactors. This Aspergillus niger (strain ATCC MYA-4892 / CBS 513.88 / FGSC A1513) protein is Probable lysosomal cobalamin transporter.